The sequence spans 205 residues: Urease accessory protein UreE (205 aa).

Positions alanine 171–serine 205 are disordered. Over residues histidine 177–glycine 196 the composition is skewed to basic residues.

The protein belongs to the UreE family.

The protein resides in the cytoplasm. Involved in urease metallocenter assembly. Binds nickel. Probably functions as a nickel donor during metallocenter assembly. The polypeptide is Urease accessory protein UreE (Bordetella parapertussis (strain 12822 / ATCC BAA-587 / NCTC 13253)).